Consider the following 130-residue polypeptide: Small ribosomal subunit protein uS8 (130 aa).

Belongs to the universal ribosomal protein uS8 family. As to quaternary structure, part of the 30S ribosomal subunit. Contacts proteins S5 and S12.

One of the primary rRNA binding proteins, it binds directly to 16S rRNA central domain where it helps coordinate assembly of the platform of the 30S subunit. The chain is Small ribosomal subunit protein uS8 from Ectopseudomonas mendocina (strain ymp) (Pseudomonas mendocina).